The following is a 155-amino-acid chain: Ribosome maturation factor RimP (155 aa).

Belongs to the RimP family.

It localises to the cytoplasm. Its function is as follows. Required for maturation of 30S ribosomal subunits. This Parabacteroides distasonis (strain ATCC 8503 / DSM 20701 / CIP 104284 / JCM 5825 / NCTC 11152) protein is Ribosome maturation factor RimP.